Consider the following 810-residue polypeptide: Transducer protein CosT (810 aa).

Residues 1-38 (MSEPTADAGDNSPSSTDTAPLDRVKAIALLPLRSYLVK) are Cytoplasmic-facing. The chain crosses the membrane as a helical span at residues 39–59 (FAVALLVILVIIAAGGFWVQA). Residues 60–323 (DATATLEANT…AFALSNQIRT (264 aa)) are Extracellular-facing. Residues 324–344 (GILGFILVALVGVVLVGGTIG) traverse the membrane as a helical segment. In terms of domain architecture, HAMP 1 spans 345–397 (RNTAAAVQSLSAAAAEIEAGNYDVDVASSRRDEIGQLFASIGSMRDALVTQID). Over 345-810 (RNTAAAVQSL…DRDVTPTQTD (466 aa)) the chain is Cytoplasmic. Residues 403 to 427 (REQATEAQQDAEAERERAEDARERA) are disordered. The segment covering 414 to 427 (EAERERAEDARERA) has biased composition (basic and acidic residues). The HAMP 2 domain maps to 439-493 (AELEAQAERYSDVMAACADGDLTRRMPADDTDNEAMAAIAASFNEMLAQWEHTII). In terms of domain architecture, Methyl-accepting transducer spans 512–748 (GAADAERASG…EAVSMTEEVA (237 aa)). Glutamate methyl ester (Glu) occurs at positions 556 and 739. The tract at residues 751-784 (SDSTAGEAQSVSAAAEEQAASMSEISDSVESLSG) is disordered. Over residues 755-774 (AGEAQSVSAAAEEQAASMSE) the composition is skewed to low complexity. The span at 775-784 (ISDSVESLSG) shows a compositional bias: polar residues.

It belongs to the methyl-accepting chemotaxis (MCP) protein family. Methylated by CheR.

The protein localises to the cell membrane. Its function is as follows. Mediates chemotaxis towards compatible osmolytes. Probably transduces the signal from the substrate-binding protein CosB to the histidine kinase CheA. This is Transducer protein CosT (cosT) from Halobacterium salinarum (strain ATCC 700922 / JCM 11081 / NRC-1) (Halobacterium halobium).